A 201-amino-acid polypeptide reads, in one-letter code: Putative amino-acid transporter Mb0498 (201 aa).

Transmembrane regions (helical) follow at residues 25–45 (VLVIVALCGIADGALIAAGVG), 57–77 (MTLVARFGGAAFLIGYALLAA), 104–124 (LVVTFLNPHVYLDTVVLIGAL), 133–153 (WFFGAGAWAASVVWFAVLGFS), and 169–189 (ILDALVAVTMIGVAVVVLVTS).

It belongs to the LysE/ArgO transporter (TC 2.A.75) family.

It is found in the cell membrane. This chain is Putative amino-acid transporter Mb0498, found in Mycobacterium bovis (strain ATCC BAA-935 / AF2122/97).